The following is a 110-amino-acid chain: UPF0213 protein DVU_3309 (110 aa).

A GIY-YIG domain is found at 8 to 83; sequence EVWFVYLLRC…KRQPTDQKLA (76 aa).

The protein belongs to the UPF0213 family.

The polypeptide is UPF0213 protein DVU_3309 (Nitratidesulfovibrio vulgaris (strain ATCC 29579 / DSM 644 / CCUG 34227 / NCIMB 8303 / VKM B-1760 / Hildenborough) (Desulfovibrio vulgaris)).